Reading from the N-terminus, the 675-residue chain is Putative exonuclease GOR (675 aa).

Positions 66-79 (VAKEAAPEASRHLG) are enriched in basic and acidic residues. 2 disordered regions span residues 66–90 (VAKE…APEG) and 225–263 (AKRT…TATT). The GOR1-125 epitope stretch occupies residues 358-483 (MPGLSRAALY…VRDGRKESLD (126 aa)).

It belongs to the REXO1/REXO3 family.

The protein localises to the cytoplasm. It is found in the nucleus. In Homo sapiens (Human), this protein is Putative exonuclease GOR (REXO1L1P).